The primary structure comprises 353 residues: Phosphoribosylformylglycinamidine cyclo-ligase (353 aa).

Belongs to the AIR synthase family.

The protein resides in the cytoplasm. The catalysed reaction is 2-formamido-N(1)-(5-O-phospho-beta-D-ribosyl)acetamidine + ATP = 5-amino-1-(5-phospho-beta-D-ribosyl)imidazole + ADP + phosphate + H(+). Its pathway is purine metabolism; IMP biosynthesis via de novo pathway; 5-amino-1-(5-phospho-D-ribosyl)imidazole from N(2)-formyl-N(1)-(5-phospho-D-ribosyl)glycinamide: step 2/2. The sequence is that of Phosphoribosylformylglycinamidine cyclo-ligase from Symbiobacterium thermophilum (strain DSM 24528 / JCM 14929 / IAM 14863 / T).